We begin with the raw amino-acid sequence, 868 residues long: Monofunctional pimaradiene synthase (868 aa).

Mg(2+)-binding residues include D620, D624, N764, T768, and E772.

The protein belongs to the terpene synthase family. Tpsd subfamily. Mg(2+) is required as a cofactor.

The catalysed reaction is (+)-copalyl diphosphate = (-)-pimara-8(14),15-diene + diphosphate. It functions in the pathway terpene metabolism; oleoresin biosynthesis. Its function is as follows. Involved in defensive oleoresin formation in conifers in response to insect attack or other injury. Involved in diterpene (C20) olefins biosynthesis. Monofunctional enzyme lacking the DXDD motif in the class II active site relevant for the cyclization of geranylgeranyl diphosphate (GGPP). Requires (+)-copalyl diphosphate ((+)-CPP) as substrate, but no activity with GGPP or ent-CPP. Pimaradiene is the major products of the enzyme. This Pinus contorta (Shore pine) protein is Monofunctional pimaradiene synthase.